We begin with the raw amino-acid sequence, 219 residues long: Ras-related protein Rab-3D (219 aa).

A2 bears the N-acetylalanine mark. Residue 29-37 coordinates GDP; the sequence is GNSSVGKTS. GTP-binding residues include S31, S32, V33, G34, K35, T36, S37, P49, and S53. T36 is a Mg(2+) binding site. A Switch 1 motif is present at residues 49–58; that stretch reads PAFVSTVGID. 2 residues coordinate Mg(2+): T54 and D77. G80 serves as a coordination point for GTP. The Switch 2 signature appears at 80 to 96; the sequence is GQERYRTITTAYYRGAM. T86 is modified (phosphothreonine; by LRRK2). Residues N135, K136, D138, A166, and K167 each coordinate GTP. GDP-binding positions include 135 to 138 and 165 to 167; these read NKCD and SAK. At S190 the chain carries Phosphoserine. Positions 190 to 219 are disordered; that stretch reads SLEPSSSPGSNGKGPALGDTPPPQPSSCSC. The segment covering 193 to 203 has biased composition (low complexity); the sequence is PSSSPGSNGKG. Residues 209–219 show a composition bias toward pro residues; sequence TPPPQPSSCSC. 2 S-geranylgeranyl cysteine lipidation sites follow: C217 and C219. C219 bears the Cysteine methyl ester mark.

Belongs to the small GTPase superfamily. Rab family. As to quaternary structure, interacts with RIMS1, RIMS2, RPH3A, RPH3AL and RAB3IP. The GTP-bound form interacts with REP15. Interacts with CHM and CHML; phosphorylation at Thr-86 disrupts these interactions. Interacts with MADD (via uDENN domain); the GTP-bound form is preferred for interaction. Requires Mg(2+) as cofactor. In terms of processing, phosphorylation of Thr-86 in the switch II region by LRRK2 prevents the association of RAB regulatory proteins, including CHM and CHML. In terms of tissue distribution, predominantly expressed in the adipocyte tissue, but is also expressed in several other organs including skin, spleen, heart and lung.

The protein resides in the cell membrane. The enzyme catalyses GTP + H2O = GDP + phosphate + H(+). With respect to regulation, regulated by guanine nucleotide exchange factors (GEFs) which promote the exchange of bound GDP for free GTP. Regulated by GTPase activating proteins (GAPs) which increase the GTP hydrolysis activity. Inhibited by GDP dissociation inhibitors (GDIs) which prevent Rab-GDP dissociation. Its function is as follows. The small GTPases Rab are key regulators of intracellular membrane trafficking, from the formation of transport vesicles to their fusion with membranes. Rabs cycle between an inactive GDP-bound form and an active GTP-bound form that is able to recruit to membranes different sets of downstream effectors directly responsible for vesicle formation, movement, tethering and fusion. RAB3D may be involved in the insulin-induced exocytosis of GLUT4-containing vesicles in adipocytes. The chain is Ras-related protein Rab-3D from Mus musculus (Mouse).